The following is a 1235-amino-acid chain: Serine/threonine-protein kinase TAO2 (1235 aa).

Ser-9 bears the Phosphoserine mark. Positions Phe-28–Val-281 constitute a Protein kinase domain. ATP contacts are provided by residues Ile-34–Val-42 and Lys-57. Catalysis depends on Asp-151, which acts as the Proton acceptor. At Ser-181 the chain carries Phosphoserine. Residues Gln-318–Arg-457 form a disordered region. Residues Ser-350 to Ala-374 show a composition bias toward low complexity. The segment covering Ser-375–Gly-393 has biased composition (acidic residues). Over residues Pro-394–Val-409 the composition is skewed to basic and acidic residues. A Phosphoserine modification is found at Ser-414. Coiled-coil stretches lie at residues Ser-486–Gln-547 and Lys-574–Asn-601. Ser-656 bears the Phosphoserine mark. The stretch at Leu-681–Glu-713 forms a coiled coil. Disordered stretches follow at residues His-732–Ser-777, Lys-804–Val-835, and Gln-891–Pro-939. Residues Asn-766–Ser-777 show a composition bias toward polar residues. 3 positions are modified to phosphoserine: Ser-777, Ser-825, and Ser-827. Over residues Pro-899 to Gly-908 the composition is skewed to acidic residues. Residues Pro-924–His-934 are compositionally biased toward pro residues. 2 consecutive transmembrane segments (helical) span residues Leu-965 to Leu-985 and Ala-987 to Cys-1007. Residues His-1011 and Gly-1031 each carry the phosphoserine modification. 3 helical membrane-spanning segments follow: residues Leu-1012–Leu-1032, Leu-1043–Met-1063, and Gln-1166–Leu-1186. The tract at residues Leu-1198–Arg-1235 is disordered.

It belongs to the protein kinase superfamily. STE Ser/Thr protein kinase family. STE20 subfamily. Interacts with MAP2K3 and MAP2K6. Self-associates. Interacts with tubulins through the C-terminal domain. Interacts with MAP3K7 and interferes with MAP3K7-binding to CHUK and thus prevents NF-kappa-B activation. Isoform 2 interacts with PCDH8; this complex may also include CDH2. Mg(2+) is required as a cofactor. Isoforms 1 and 2 are autophosphorylated. In terms of processing, C-terminal cleavage of isoform 1 and subsequent nuclear localization requires CASP9 activity. Post-translationally, autophosphorylated. Phosphorylated by ATM. Phosphorylated on Ser-1031 by MAPK14. This phosphorylation is required PCDH8 for endocytosis. As to expression, ubiquitously expressed, with a higher level of expression in testis and brain.

The protein resides in the cytoplasmic vesicle membrane. Its subcellular location is the cytoplasm. The protein localises to the cytoskeleton. It localises to the nucleus. It is found in the cell projection. The protein resides in the dendrite. The enzyme catalyses L-seryl-[protein] + ATP = O-phospho-L-seryl-[protein] + ADP + H(+). It catalyses the reaction L-threonyl-[protein] + ATP = O-phospho-L-threonyl-[protein] + ADP + H(+). Its activity is regulated as follows. Selectively inhibited by the enantiopure organoruthenium inhibitor 9E1. Activated following arsenic trioxide (As(2)O(3)) treatment. In terms of biological role, serine/threonine-protein kinase involved in different processes such as membrane blebbing and apoptotic bodies formation DNA damage response and MAPK14/p38 MAPK stress-activated MAPK cascade. Phosphorylates itself, MBP, activated MAPK8, MAP2K3, MAP2K6 and tubulins. Activates the MAPK14/p38 MAPK signaling pathway through the specific activation and phosphorylation of the upstream MAP2K3 and MAP2K6 kinases. In response to DNA damage, involved in the G2/M transition DNA damage checkpoint by activating the p38/MAPK14 stress-activated MAPK cascade, probably by mediating phosphorylation of upstream MAP2K3 and MAP2K6 kinases. Isoform 1, but not isoform 2, plays a role in apoptotic morphological changes, including cell contraction, membrane blebbing and apoptotic bodies formation. This function, which requires the activation of MAPK8/JNK and nuclear localization of C-terminally truncated isoform 1, may be linked to the mitochondrial CASP9-associated death pathway. Isoform 1 binds to microtubules and affects their organization and stability independently of its kinase activity. Prevents MAP3K7-mediated activation of CHUK, and thus NF-kappa-B activation, but not that of MAPK8/JNK. May play a role in the osmotic stress-MAPK8 pathway. Isoform 2, but not isoform 1, is required for PCDH8 endocytosis. Following homophilic interactions between PCDH8 extracellular domains, isoform 2 phosphorylates and activates MAPK14/p38 MAPK which in turn phosphorylates isoform 2. This process leads to PCDH8 endocytosis and CDH2 cointernalization. Both isoforms are involved in MAPK14 phosphorylation. The protein is Serine/threonine-protein kinase TAO2 (TAOK2) of Homo sapiens (Human).